The sequence spans 158 residues: SsrA-binding protein (158 aa).

It belongs to the SmpB family.

Its subcellular location is the cytoplasm. Its function is as follows. Required for rescue of stalled ribosomes mediated by trans-translation. Binds to transfer-messenger RNA (tmRNA), required for stable association of tmRNA with ribosomes. tmRNA and SmpB together mimic tRNA shape, replacing the anticodon stem-loop with SmpB. tmRNA is encoded by the ssrA gene; the 2 termini fold to resemble tRNA(Ala) and it encodes a 'tag peptide', a short internal open reading frame. During trans-translation Ala-aminoacylated tmRNA acts like a tRNA, entering the A-site of stalled ribosomes, displacing the stalled mRNA. The ribosome then switches to translate the ORF on the tmRNA; the nascent peptide is terminated with the 'tag peptide' encoded by the tmRNA and targeted for degradation. The ribosome is freed to recommence translation, which seems to be the essential function of trans-translation. The polypeptide is SsrA-binding protein (Chloroflexus aggregans (strain MD-66 / DSM 9485)).